We begin with the raw amino-acid sequence, 182 residues long: Bifunctional protein PyrR (182 aa).

Residues 99-111 (IVLVDDVLFTGRT) carry the PRPP-binding motif.

Belongs to the purine/pyrimidine phosphoribosyltransferase family. PyrR subfamily. Homodimer and homohexamer; in equilibrium.

The enzyme catalyses UMP + diphosphate = 5-phospho-alpha-D-ribose 1-diphosphate + uracil. Its function is as follows. Regulates transcriptional attenuation of the pyrimidine nucleotide (pyr) operon by binding in a uridine-dependent manner to specific sites on pyr mRNA. This disrupts an antiterminator hairpin in the RNA and favors formation of a downstream transcription terminator, leading to a reduced expression of downstream genes. Functionally, also displays a weak uracil phosphoribosyltransferase activity which is not physiologically significant. The polypeptide is Bifunctional protein PyrR (Caldicellulosiruptor bescii (strain ATCC BAA-1888 / DSM 6725 / KCTC 15123 / Z-1320) (Anaerocellum thermophilum)).